The following is a 62-amino-acid chain: Photosystem II reaction center protein Z (62 aa).

2 consecutive transmembrane segments (helical) span residues 8–28 (AVFA…VVFA) and 41–61 (FSGT…NSLI).

Belongs to the PsbZ family. In terms of assembly, PSII is composed of 1 copy each of membrane proteins PsbA, PsbB, PsbC, PsbD, PsbE, PsbF, PsbH, PsbI, PsbJ, PsbK, PsbL, PsbM, PsbT, PsbY, PsbZ, Psb30/Ycf12, at least 3 peripheral proteins of the oxygen-evolving complex and a large number of cofactors. It forms dimeric complexes.

The protein localises to the plastid. The protein resides in the chloroplast thylakoid membrane. Its function is as follows. May control the interaction of photosystem II (PSII) cores with the light-harvesting antenna, regulates electron flow through the 2 photosystem reaction centers. PSII is a light-driven water plastoquinone oxidoreductase, using light energy to abstract electrons from H(2)O, generating a proton gradient subsequently used for ATP formation. The chain is Photosystem II reaction center protein Z from Nymphaea alba (White water-lily).